The sequence spans 49 residues: Disintegrin eristostatin (49 aa).

The 49-residue stretch at 1-49 folds into the Disintegrin domain; it reads QEEPCATGPCCRRCKFKRAGKVCRVARGDWNDDYCTGKSCDCPKNPWNG. Intrachain disulfides connect Cys-5/Cys-14, Cys-10/Cys-35, Cys-11/Cys-40, and Cys-23/Cys-42. The Cell attachment site signature appears at 27-29; sequence RGD.

It belongs to the venom metalloproteinase (M12B) family. P-II subfamily. P-IIa sub-subfamily. As to quaternary structure, monomer. Expressed by the venom gland.

It is found in the secreted. In terms of biological role, is a potent inhibitor of ADP-induced platelet aggregation. Acts by binding to alpha-IIb/beta-3 (ITGA2B/ITGB3) receptor on the platelet surface. Binds with the same high affinity to resting and activated platelets. Also binds the alpha-4/beta-1 (ITGA4/ITGB1) integrin. Is a potent inhibitor of human and murine melanoma metastases in mouse model systems, also due to the inhibition of binding between the alpha-4/beta-1 integrin and the vascular cell adhesion protein VCAM1. Reacts neither with the integrin alpha-V/beta-3 (ITGAV/ITGB3) vitronectin receptor nor with the integrin alpha-5/beta-1 (ITGA5/ITGB1) fibronectin receptor. Has no effect on cell proliferation or angiogenesis. Specifically inhibits cell migration on fibronectin, but not that on collagen IV or laminin. May involve fibronectin-binding integrins that mediate cell migration. The protein is Disintegrin eristostatin of Eristicophis macmahoni (Leaf-nosed viper).